The sequence spans 141 residues: Large ribosomal subunit protein uL13 (141 aa).

Belongs to the universal ribosomal protein uL13 family. In terms of assembly, part of the 50S ribosomal subunit.

Functionally, this protein is one of the early assembly proteins of the 50S ribosomal subunit, although it is not seen to bind rRNA by itself. It is important during the early stages of 50S assembly. This is Large ribosomal subunit protein uL13 from Sulfurovum sp. (strain NBC37-1).